Consider the following 862-residue polypeptide: Protein translocase subunit SecA (862 aa).

ATP contacts are provided by residues glutamine 88, 106–110, and aspartate 506; that span reads GEGKT. Zn(2+)-binding residues include cysteine 839, cysteine 841, cysteine 850, and histidine 851.

It belongs to the SecA family. Monomer and homodimer. Part of the essential Sec protein translocation apparatus which comprises SecA, SecYEG and auxiliary proteins SecDF-YajC and YidC. Zn(2+) serves as cofactor.

The protein localises to the cell inner membrane. It is found in the cytoplasm. It catalyses the reaction ATP + H2O + cellular proteinSide 1 = ADP + phosphate + cellular proteinSide 2.. Its function is as follows. Part of the Sec protein translocase complex. Interacts with the SecYEG preprotein conducting channel. Has a central role in coupling the hydrolysis of ATP to the transfer of proteins into and across the cell membrane, serving as an ATP-driven molecular motor driving the stepwise translocation of polypeptide chains across the membrane. This is Protein translocase subunit SecA from Campylobacter jejuni subsp. doylei (strain ATCC BAA-1458 / RM4099 / 269.97).